The sequence spans 372 residues: Beta sliding clamp (372 aa).

The protein belongs to the beta sliding clamp family. Forms a ring-shaped head-to-tail homodimer around DNA which binds and tethers DNA polymerases and other proteins to the DNA. The DNA replisome complex has a single clamp-loading complex (3 tau and 1 each of delta, delta', psi and chi subunits) which binds 3 Pol III cores (1 core on the leading strand and 2 on the lagging strand) each with a beta sliding clamp dimer. Additional proteins in the replisome are other copies of gamma, psi and chi, Ssb, DNA helicase and RNA primase.

The protein localises to the cytoplasm. In terms of biological role, confers DNA tethering and processivity to DNA polymerases and other proteins. Acts as a clamp, forming a ring around DNA (a reaction catalyzed by the clamp-loading complex) which diffuses in an ATP-independent manner freely and bidirectionally along dsDNA. Initially characterized for its ability to contact the catalytic subunit of DNA polymerase III (Pol III), a complex, multichain enzyme responsible for most of the replicative synthesis in bacteria; Pol III exhibits 3'-5' exonuclease proofreading activity. The beta chain is required for initiation of replication as well as for processivity of DNA replication. This chain is Beta sliding clamp (dnaN), found in Caulobacter vibrioides (strain ATCC 19089 / CIP 103742 / CB 15) (Caulobacter crescentus).